Reading from the N-terminus, the 509-residue chain is uncharacterized protein (509 aa).

The region spanning 108-225 is the G domain; that stretch reads GKSSLCNLLA…KRHKPLFPVI (118 aa).

This is an uncharacterized protein from Acinetobacter baylyi (strain ATCC 33305 / BD413 / ADP1).